The sequence spans 252 residues: Imidazole glycerol phosphate synthase subunit HisF (252 aa).

Residues Asp11 and Asp130 contribute to the active site.

Belongs to the HisA/HisF family. Heterodimer of HisH and HisF.

The protein localises to the cytoplasm. The catalysed reaction is 5-[(5-phospho-1-deoxy-D-ribulos-1-ylimino)methylamino]-1-(5-phospho-beta-D-ribosyl)imidazole-4-carboxamide + L-glutamine = D-erythro-1-(imidazol-4-yl)glycerol 3-phosphate + 5-amino-1-(5-phospho-beta-D-ribosyl)imidazole-4-carboxamide + L-glutamate + H(+). It participates in amino-acid biosynthesis; L-histidine biosynthesis; L-histidine from 5-phospho-alpha-D-ribose 1-diphosphate: step 5/9. Functionally, IGPS catalyzes the conversion of PRFAR and glutamine to IGP, AICAR and glutamate. The HisF subunit catalyzes the cyclization activity that produces IGP and AICAR from PRFAR using the ammonia provided by the HisH subunit. The chain is Imidazole glycerol phosphate synthase subunit HisF from Geobacillus thermodenitrificans (strain NG80-2).